The chain runs to 779 residues: Subtilisin-like protease SBT3.18 (779 aa).

The first 21 residues, 1–21, serve as a signal peptide directing secretion; that stretch reads MYFWVMFFTLMIKVKLYITNG. Positions 22–109 are cleaved as a propeptide — activation peptide; the sequence is DIFQNRPTVY…VFKSKSLKLH (88 aa). Residues 30 to 109 form the Inhibitor I9 domain; it reads VYVVYLGANR…VFKSKSLKLH (80 aa). The N-linked (GlcNAc...) asparagine glycan is linked to N84. The Peptidase S8 domain occupies 113–621; the sequence is SWDFLGLAVD…AGHINPLKAM (509 aa). Residues D144 and H221 each act as charge relay system in the active site. N-linked (GlcNAc...) asparagine glycans are attached at residues N236 and N406. S553 (charge relay system) is an active-site residue.

This sequence belongs to the peptidase S8 family.

The protein localises to the secreted. The chain is Subtilisin-like protease SBT3.18 from Arabidopsis thaliana (Mouse-ear cress).